The primary structure comprises 239 residues: Aspartate/glutamate leucyltransferase (239 aa).

The protein belongs to the R-transferase family. Bpt subfamily.

It is found in the cytoplasm. The enzyme catalyses N-terminal L-glutamyl-[protein] + L-leucyl-tRNA(Leu) = N-terminal L-leucyl-L-glutamyl-[protein] + tRNA(Leu) + H(+). It catalyses the reaction N-terminal L-aspartyl-[protein] + L-leucyl-tRNA(Leu) = N-terminal L-leucyl-L-aspartyl-[protein] + tRNA(Leu) + H(+). Its function is as follows. Functions in the N-end rule pathway of protein degradation where it conjugates Leu from its aminoacyl-tRNA to the N-termini of proteins containing an N-terminal aspartate or glutamate. This Alkalilimnicola ehrlichii (strain ATCC BAA-1101 / DSM 17681 / MLHE-1) protein is Aspartate/glutamate leucyltransferase.